A 329-amino-acid polypeptide reads, in one-letter code: MQTLAQNLTSQGVDASLTQLIHTLANTSKEISHAVRHGALAGVLGATEQENVQGETQKKLDVITNDMLKDALKADNTVRGLASEEEDYIVEVGDKGEYLVCFDPLDGSSNIDINSLVGTIFSVLPAPTGELTESSFLQAGRKQVAAGYVLYGPSTMLALTTGKGVQLFTLNPETNEYLLTTEAMSISKDTGEFAINMSNQRFWEAPMQTYISDLLLGTIGPREKAFNMRWIAAMVGDVHRVLSRGGIFTYPTDNKNPQKPYKLRLMYEANPMSFLVEQAGGIASTGYEAIMDIEPSEIHQRVAVILGSANEVKACLEYHSLDYSEEPAL.

The Mg(2+) site is built by glutamate 84, aspartate 103, leucine 105, and aspartate 106. Residues 106–109, asparagine 196, and lysine 262 contribute to the substrate site; that span reads DGSS. Position 268 (glutamate 268) interacts with Mg(2+).

It belongs to the FBPase class 1 family. As to quaternary structure, homotetramer. Requires Mg(2+) as cofactor.

Its subcellular location is the cytoplasm. It carries out the reaction beta-D-fructose 1,6-bisphosphate + H2O = beta-D-fructose 6-phosphate + phosphate. It functions in the pathway carbohydrate biosynthesis; gluconeogenesis. This is Fructose-1,6-bisphosphatase class 1 from Shewanella woodyi (strain ATCC 51908 / MS32).